The primary structure comprises 752 residues: Peptidyl-prolyl cis-trans isomerase G (752 aa).

One can recognise a PPIase cyclophilin-type domain in the interval 11–176 (FFDIAINNQP…AEVRILSCGE (166 aa)). The segment covering 182-193 (KVKKEEKKRHKS) has biased composition (basic residues). The disordered stretch occupies residues 182 to 752 (KVKKEEKKRH…SPGTDEDKSG (571 aa)). Low complexity predominate over residues 194 to 214 (SSSSSSSDSDSSSDSQSSSDS). The span at 226–251 (RKRKKKHRKNSRKHKKEKKKRKKSKK) shows a compositional bias: basic residues. A phosphoserine mark is found at Ser252, Ser254, Ser255, Ser257, and Ser288. The segment covering 290 to 308 (PKADDKERKNREREREREC) has biased composition (basic and acidic residues). The residue at position 313 (Ser313) is a Phosphoserine. A compositionally biased stretch (basic residues) spans 327 to 345 (FGRKIKGRGPRRYRTPSRS). Composition is skewed to basic and acidic residues over residues 346 to 366 (RSRDRFRRSETPPHWRQEMQR) and 377 to 447 (RWIK…DKYN). Ser354 bears the Phosphoserine mark. A Phosphothreonine modification is found at Thr356. Phosphoserine is present on Ser384. Lys390 is covalently cross-linked (Glycyl lysine isopeptide (Lys-Gly) (interchain with G-Cter in SUMO2)). A phosphoserine mark is found at Ser395, Ser411, and Ser413. Positions 448 to 461 (KNKVKKRGKSKSRS) are enriched in basic residues. Composition is skewed to basic and acidic residues over residues 462-552 (KSKE…DLTK) and 577-598 (RSHDRDRSRSKEYHRYREQEYR). Residues 599 to 625 (RRGRSRSRDRRTPGRSRSKDRRRRRRD) show a composition bias toward basic residues. A compositionally biased stretch (basic and acidic residues) spans 626-682 (SRSSEREESQSRNKEKYRSQDSKSSHRKENSEGEKRMYSKSRDHSSSNNNREKKADI). A phosphoserine mark is found at Ser685 and Ser688. The segment covering 685–705 (SPVSKTKQSSQDNEVKSSTLK) has biased composition (polar residues). A Glycyl lysine isopeptide (Lys-Gly) (interchain with G-Cter in SUMO2) cross-link involves residue Lys691. A phosphoserine mark is found at Ser694, Ser742, and Ser743. Basic and acidic residues predominate over residues 706–752 (NQEDEKTRSPVEKENQKSKGQENDHVHDKNKKCDHESSPGTDEDKSG). Thr746 carries the phosphothreonine modification. Position 751 is a phosphoserine (Ser751).

In terms of assembly, interacts with CLK1, PNN and with the phosphorylated C-terminal domain of RNA polymerase II.

Its subcellular location is the nucleus matrix. It is found in the nucleus speckle. The catalysed reaction is [protein]-peptidylproline (omega=180) = [protein]-peptidylproline (omega=0). With respect to regulation, inhibited by cyclosporin A (CsA). PPIase that catalyzes the cis-trans isomerization of proline imidic peptide bonds in oligopeptides and may therefore assist protein folding. May be implicated in the folding, transport, and assembly of proteins. May play an important role in the regulation of pre-mRNA splicing. The chain is Peptidyl-prolyl cis-trans isomerase G (Ppig) from Rattus norvegicus (Rat).